We begin with the raw amino-acid sequence, 1307 residues long: CRISPR-associated endonuclease Cas12a (1307 aa).

The WED-I (OBD-I) stretch occupies residues 1–35 (MTQFEGFTNLYQVSKTLRFELIPQGKTLKHIQEQG). The interval 36–320 (FIEEDKARND…SDRNTLSFIL (285 aa)) is REC1 (helical-I). 47-51 (YKELK) serves as a coordination point for crRNA. A coiled-coil region spans residues 74–106 (ENLSAAIDSYRKEKTEETRNALIEEQATYRNAI). Residues 175 to 176 (NR) and 307 to 310 (KQIL) contribute to the crRNA site. Residues 321-526 (EEFKSDEEVI…ARNYATKKPY (206 aa)) are WED-II (helical-II). A WED-II (OBD-I) region spans residues 527–598 (SVEKFKLNFQ…GFDKMYYDYF (72 aa)). The PAM-binding on target DNA DNA-binding region spans 599 to 607 (PDAAKMIPK). The segment at 599-718 (PDAAKMIPKC…EYYAELNPLL (120 aa)) is PI (LHD). Residues 719 to 884 (YHISFQRIAE…ITLNYQAANS (166 aa)) form a WED-III (OBD-III) region. A crRNA-binding site is contributed by 752–761 (KGHHGKPNLH). Positions 780 to 783 (KLNG) form a DNA-binding region, target DNA. The For pre-crRNA processing role is filled by His800. 806-808 (MLN) provides a ligand contact to crRNA. Catalysis depends on for pre-crRNA processing residues Lys809 and Lys860. The interval 885 to 940 (PSKFNQRVNAYLKEHPETPIIGIDRGERNLIYITVIDSTGKILEQRSLNTIQQFDY) is ruvC-I. Asp908 functions as the For DNase activity of RuvC domain in the catalytic mechanism. The interval 941-957 (QKKLDNREKERVAARQA) is bridge helix. Positions 951-968 (RVAARQAWSVVGTIKDLK) form a DNA-binding region, target DNA. The interval 958–1066 (WSVVGTIKDL…TQSGFLFYVP (109 aa)) is ruvC-II. Glu993 serves as the catalytic For DNase activity of RuvC domain. A DNA-binding region (target DNA) is located at residues 1051-1053 (SFA). The tract at residues 1067–1262 (APYTSKIDPL…FQNPEWPMDA (196 aa)) is nuclease domain. The For DNase activity of nuclease domain role is filled by Arg1226. The For DNase activity of RuvC domain role is filled by Asp1263. The ruvC-III stretch occupies residues 1263–1307 (DANGAYHIALKGQLLLNHLKESKDLKLQNGISNQDWLAYIQELRN).

This sequence belongs to the CRISPR-associated endonuclease Cas12a family. As to quaternary structure, monomer. Mg(2+) is required as a cofactor.

It carries out the reaction Endonucleolytic cleavage to 5'-phosphodinucleotide and 5'-phosphooligonucleotide end-products.. It catalyses the reaction RNA = a 5'-hydroxy-ribonucleotide + n nucleoside-2',3'-cyclophosphates.. Its function is as follows. CRISPR (clustered regularly interspaced short palindromic repeat), is an adaptive immune system that provides protection against mobile genetic elements (viruses, transposable elements and conjugative plasmids). CRISPR clusters contain sequences complementary to antecedent mobile elements and target invading nucleic acids. CRISPR clusters are transcribed and processed into CRISPR RNA (crRNA). Recognizes a short motif in the CRISPR repeat sequences (the 5' PAM or protospacer adjacent motif, TTTN in this organism) to help distinguish self versus nonself, as targets within the bacterial CRISPR locus do not have PAMs. Has dsDNA endonuclease activity, results in staggered 4-base 5' overhangs 19 and 22 bases downstream of the PAM on the non-targeted and targeted strand respectively. Non-target strand cleavage by the RuvC domain is probably a prerequisite of target strand cleavage by the Nuc domain. Protects E.coli against plasmids and bacteriophage M13mp18, phage T4 with hydroxymethyl or unmodified (but not glycosylated) cytosines and to a lesser extent against lambda and VpaE1 phage. In this CRISPR system correct processing of pre-crRNA requires only this protein and the CRISPR locus. This chain is CRISPR-associated endonuclease Cas12a, found in Acidaminococcus sp. (strain BV3L6).